Reading from the N-terminus, the 641-residue chain is Protein GAMETE EXPRESSED 3 (641 aa).

An N-terminal signal peptide occupies residues 1-29 (MVAFRFVYIPLPFFFFFFFFFVFFSGVSQ). A helical membrane pass occupies residues 441-461 (IIWFLLFEFVIMVLFAALVRF). The tract at residues 570–627 (ITIFQTPSDESSSEESYRDEHYDDVADDEHDEDDLDRKQKGKLLAHSEGSSNDGDGIA) is disordered. Basic and acidic residues predominate over residues 584-593 (ESYRDEHYDD). Positions 594-603 (VADDEHDEDD) are enriched in acidic residues.

In terms of tissue distribution, expressed in mature siliques and in pollen, mainly in the sperm cells. Detected in the egg cell within the female gametophyte.

The protein resides in the cell membrane. In terms of biological role, required for micropylar pollen tube guidance. Plays a role during early embryo patterning. In Arabidopsis thaliana (Mouse-ear cress), this protein is Protein GAMETE EXPRESSED 3 (GEX3).